A 632-amino-acid chain; its full sequence is Chaperone protein HtpG (632 aa).

The a; substrate-binding stretch occupies residues 1–343 (MSEQTINNKE…SNDLALNVSR (343 aa)). The segment at 344–560 (EILQDNKVTQ…DFEMGTQMAK (217 aa)) is b. Residues 561-632 (LLEAAGQAAP…LSAMNQLLSK (72 aa)) are c.

The protein belongs to the heat shock protein 90 family. As to quaternary structure, homodimer.

The protein localises to the cytoplasm. Molecular chaperone. Has ATPase activity. This chain is Chaperone protein HtpG, found in Aliivibrio salmonicida (strain LFI1238) (Vibrio salmonicida (strain LFI1238)).